Reading from the N-terminus, the 282-residue chain is Bis(5'-nucleosyl)-tetraphosphatase, symmetrical (282 aa).

The protein belongs to the Ap4A hydrolase family.

The catalysed reaction is P(1),P(4)-bis(5'-adenosyl) tetraphosphate + H2O = 2 ADP + 2 H(+). Its function is as follows. Hydrolyzes diadenosine 5',5'''-P1,P4-tetraphosphate to yield ADP. This chain is Bis(5'-nucleosyl)-tetraphosphatase, symmetrical, found in Escherichia coli O127:H6 (strain E2348/69 / EPEC).